The following is a 425-amino-acid chain: Podosporapepsin (425 aa).

A signal peptide spans 1–28 (MVSLTDLFLASLLVPTSPWLCLPPRIDT). Positions 29–91 (IDQRGGRVTL…QEEAFARIKR (63 aa)) are cleaved as a propeptide — activation peptide. One can recognise a Peptidase A1 domain in the interval 108-419 (YVTPVTIGTP…GTNPPRIGFA (312 aa)). Residue aspartate 126 is part of the active site. 2 N-linked (GlcNAc...) asparagine glycosylation sites follow: asparagine 184 and asparagine 273. Aspartate 310 is a catalytic residue. A disulfide bridge links cysteine 346 with cysteine 381. N-linked (GlcNAc...) asparagine glycosylation is present at asparagine 370.

This sequence belongs to the peptidase A1 family.

The sequence is that of Podosporapepsin (PAPA) from Podospora anserina (Pleurage anserina).